Reading from the N-terminus, the 76-residue chain is ATP synthase subunit c (76 aa).

The next 2 membrane-spanning stretches (helical) occupy residues 5-25 and 54-74; these read GIIAIAAAIAAFTGIGAGIGI and AALAEATAIYGLVVALVLVFL.

Belongs to the ATPase C chain family. As to quaternary structure, F-type ATPases have 2 components, F(1) - the catalytic core - and F(0) - the membrane proton channel. F(1) has five subunits: alpha(3), beta(3), gamma(1), delta(1), epsilon(1). F(0) has three main subunits: a(1), b(2) and c(10-14). The alpha and beta chains form an alternating ring which encloses part of the gamma chain. F(1) is attached to F(0) by a central stalk formed by the gamma and epsilon chains, while a peripheral stalk is formed by the delta and b chains.

The protein resides in the cell membrane. Functionally, f(1)F(0) ATP synthase produces ATP from ADP in the presence of a proton or sodium gradient. F-type ATPases consist of two structural domains, F(1) containing the extramembraneous catalytic core and F(0) containing the membrane proton channel, linked together by a central stalk and a peripheral stalk. During catalysis, ATP synthesis in the catalytic domain of F(1) is coupled via a rotary mechanism of the central stalk subunits to proton translocation. Its function is as follows. Key component of the F(0) channel; it plays a direct role in translocation across the membrane. A homomeric c-ring of between 10-14 subunits forms the central stalk rotor element with the F(1) delta and epsilon subunits. In Ruminiclostridium cellulolyticum (strain ATCC 35319 / DSM 5812 / JCM 6584 / H10) (Clostridium cellulolyticum), this protein is ATP synthase subunit c.